Here is a 31-residue protein sequence, read N- to C-terminus: Mycofactocin precursor peptide (31 aa).

It belongs to the mycofactocin precursor peptide family. The post-translational modifications that lead to mycofactocin involve oxidative decarboxylation of the C-terminal tyrosine residue catalyzed by MftC, introduction of a tyramine-valine cross-link, removal of the modified C-terminal dipeptide by MftE. The released dipeptide then undergoes oxidative deamination by MftD, glycosylation by MftF and methylation by an unknown enzyme.

Functionally, precursor peptide that leads to mycofactocin (MFT) after extensive post-translational modifications by enzymes encoded by adjacent genes. Mycofactocin acts as a redox cofactor of nicotinamide-dependent oxidoreductases encoded in the same locus. Is required for the in vivo ethanol assimilation in M.smegmatis. The sequence is that of Mycofactocin precursor peptide from Mycolicibacterium smegmatis (strain ATCC 700084 / mc(2)155) (Mycobacterium smegmatis).